A 155-amino-acid chain; its full sequence is Ribosome maturation factor RimP (155 aa).

This sequence belongs to the RimP family.

It localises to the cytoplasm. In terms of biological role, required for maturation of 30S ribosomal subunits. This chain is Ribosome maturation factor RimP, found in Prochlorococcus marinus (strain SARG / CCMP1375 / SS120).